We begin with the raw amino-acid sequence, 309 residues long: Porphobilinogen deaminase (309 aa).

An S-(dipyrrolylmethanemethyl)cysteine modification is found at Cys-241.

The protein belongs to the HMBS family. As to quaternary structure, monomer. Requires dipyrromethane as cofactor.

It carries out the reaction 4 porphobilinogen + H2O = hydroxymethylbilane + 4 NH4(+). It functions in the pathway porphyrin-containing compound metabolism; protoporphyrin-IX biosynthesis; coproporphyrinogen-III from 5-aminolevulinate: step 2/4. In terms of biological role, tetrapolymerization of the monopyrrole PBG into the hydroxymethylbilane pre-uroporphyrinogen in several discrete steps. The polypeptide is Porphobilinogen deaminase (Bacillus cereus (strain AH820)).